Reading from the N-terminus, the 289-residue chain is Acetyl-coenzyme A carboxylase carboxyl transferase subunit beta (289 aa).

Residues methionine 34–phenylalanine 289 enclose the CoA carboxyltransferase N-terminal domain. Residues cysteine 38, cysteine 41, cysteine 57, and cysteine 60 each contribute to the Zn(2+) site. The C4-type zinc finger occupies cysteine 38–cysteine 60.

The protein belongs to the AccD/PCCB family. In terms of assembly, acetyl-CoA carboxylase is a heterohexamer composed of biotin carboxyl carrier protein (AccB), biotin carboxylase (AccC) and two subunits each of ACCase subunit alpha (AccA) and ACCase subunit beta (AccD). Requires Zn(2+) as cofactor.

The protein resides in the cytoplasm. The catalysed reaction is N(6)-carboxybiotinyl-L-lysyl-[protein] + acetyl-CoA = N(6)-biotinyl-L-lysyl-[protein] + malonyl-CoA. It functions in the pathway lipid metabolism; malonyl-CoA biosynthesis; malonyl-CoA from acetyl-CoA: step 1/1. Component of the acetyl coenzyme A carboxylase (ACC) complex. Biotin carboxylase (BC) catalyzes the carboxylation of biotin on its carrier protein (BCCP) and then the CO(2) group is transferred by the transcarboxylase to acetyl-CoA to form malonyl-CoA. In Clostridium botulinum (strain Okra / Type B1), this protein is Acetyl-coenzyme A carboxylase carboxyl transferase subunit beta.